The chain runs to 101 residues: Small ribosomal subunit protein uS14 (101 aa).

The protein belongs to the universal ribosomal protein uS14 family. Part of the 30S ribosomal subunit. Contacts proteins S3 and S10.

In terms of biological role, binds 16S rRNA, required for the assembly of 30S particles and may also be responsible for determining the conformation of the 16S rRNA at the A site. This chain is Small ribosomal subunit protein uS14, found in Alteromonas mediterranea (strain DSM 17117 / CIP 110805 / LMG 28347 / Deep ecotype).